Here is an 860-residue protein sequence, read N- to C-terminus: Leucine--tRNA ligase (860 aa).

The 'HIGH' region signature appears at 42-52 (PYPSGRLHMGH). The short motif at 619–623 (KMSKS) is the 'KMSKS' region element. K622 serves as a coordination point for ATP.

It belongs to the class-I aminoacyl-tRNA synthetase family.

Its subcellular location is the cytoplasm. The catalysed reaction is tRNA(Leu) + L-leucine + ATP = L-leucyl-tRNA(Leu) + AMP + diphosphate. The chain is Leucine--tRNA ligase from Cronobacter sakazakii (strain ATCC BAA-894) (Enterobacter sakazakii).